Reading from the N-terminus, the 213-residue chain is Probable GTP-binding protein EngB (213 aa).

Residues 30–204 form the EngB-type G domain; that stretch reads EGFEVAFAGR…YTVLAGWMEL (175 aa). Residues 38-45, 64-68, 82-85, 149-152, and 182-185 each bind GTP; these read GRSNAGKS, GRTQL, DLPG, TKAD, and LFSA. Residues serine 45 and threonine 66 each contribute to the Mg(2+) site.

Belongs to the TRAFAC class TrmE-Era-EngA-EngB-Septin-like GTPase superfamily. EngB GTPase family. Mg(2+) serves as cofactor.

Its function is as follows. Necessary for normal cell division and for the maintenance of normal septation. The chain is Probable GTP-binding protein EngB from Pseudomonas fluorescens (strain ATCC BAA-477 / NRRL B-23932 / Pf-5).